The following is a 353-amino-acid chain: Photosystem II D2 protein (353 aa).

T2 bears the N-acetylthreonine mark. T2 is subject to Phosphothreonine. Residues C41–T61 traverse the membrane as a helical segment. H118 contributes to the chlorophyll a binding site. A helical membrane pass occupies residues G125–P141. 2 residues coordinate pheophytin a: Q130 and N143. The chain crosses the membrane as a helical span at residues V153–S166. Residue H198 participates in chlorophyll a binding. A helical transmembrane segment spans residues A208 to D228. Residues H215 and F262 each contribute to the a plastoquinone site. H215 contributes to the Fe cation binding site. H269 serves as a coordination point for Fe cation. A helical membrane pass occupies residues G279–R295.

This sequence belongs to the reaction center PufL/M/PsbA/D family. In terms of assembly, PSII is composed of 1 copy each of membrane proteins PsbA, PsbB, PsbC, PsbD, PsbE, PsbF, PsbH, PsbI, PsbJ, PsbK, PsbL, PsbM, PsbT, PsbX, PsbY, PsbZ, Psb30/Ycf12, at least 3 peripheral proteins of the oxygen-evolving complex and a large number of cofactors. It forms dimeric complexes. The D1/D2 heterodimer binds P680, chlorophylls that are the primary electron donor of PSII, and subsequent electron acceptors. It shares a non-heme iron and each subunit binds pheophytin, quinone, additional chlorophylls, carotenoids and lipids. There is also a Cl(-1) ion associated with D1 and D2, which is required for oxygen evolution. The PSII complex binds additional chlorophylls, carotenoids and specific lipids. serves as cofactor.

Its subcellular location is the plastid. It is found in the chloroplast thylakoid membrane. The enzyme catalyses 2 a plastoquinone + 4 hnu + 2 H2O = 2 a plastoquinol + O2. Functionally, photosystem II (PSII) is a light-driven water:plastoquinone oxidoreductase that uses light energy to abstract electrons from H(2)O, generating O(2) and a proton gradient subsequently used for ATP formation. It consists of a core antenna complex that captures photons, and an electron transfer chain that converts photonic excitation into a charge separation. The D1/D2 (PsbA/PsbD) reaction center heterodimer binds P680, the primary electron donor of PSII as well as several subsequent electron acceptors. D2 is needed for assembly of a stable PSII complex. This chain is Photosystem II D2 protein, found in Staurastrum punctulatum (Green alga).